The chain runs to 264 residues: V-type proton ATPase subunit D (264 aa).

The segment covering 214-230 (RDNAETDAQMKAKKAEQ) has biased composition (basic and acidic residues). Residues 214 to 264 (RDNAETDAQMKAKKAEQQRLALADSENAEGEQTENTPADILAAEEDEDVIF) form a disordered region. Acidic residues predominate over residues 255–264 (AAEEDEDVIF).

It belongs to the V-ATPase D subunit family. In terms of assembly, V-ATPase is a heteromultimeric enzyme composed of a peripheral catalytic V1 complex (components A to H) attached to an integral membrane V0 proton pore complex (components: a, c, c', c'', d, e, f and VOA1).

The protein resides in the vacuole membrane. Functionally, subunit of the V1 complex of vacuolar(H+)-ATPase (V-ATPase), a multisubunit enzyme composed of a peripheral complex (V1) that hydrolyzes ATP and a membrane integral complex (V0) that translocates protons. V-ATPase is responsible for acidifying and maintaining the pH of intracellular compartments. The polypeptide is V-type proton ATPase subunit D (vma-8) (Neurospora crassa (strain ATCC 24698 / 74-OR23-1A / CBS 708.71 / DSM 1257 / FGSC 987)).